A 192-amino-acid chain; its full sequence is MKNLFLIIGAPGSGKTTDAGCIAQMNQSVAHYSTGDLLRAEVAKDSELGKKIDKIISGGNLVPLEIVINTITSAIHACEKDFIIIDGYPRSVEQMTELDKVLANEYDINLSAVIEVNVSEEVAKERVLGRARGADDNEEVFYNRMKVFVEPIEEIRKFYNEKGIFHSINGERTIEEIVTDINAIIVKKIVQG.

An ATP-binding site is contributed by 12-17 (GSGKTT). Positions 33–62 (STGDLLRAEVAKDSELGKKIDKIISGGNLV) are NMP. AMP is bound by residues Thr34, Arg39, 60-62 (NLV), 87-90 (GYPR), and Gln94. The tract at residues 129–135 (GRARGAD) is LID. Arg130 provides a ligand contact to ATP. The AMP site is built by Arg132 and Arg144. Arg172 is an ATP binding site.

Belongs to the adenylate kinase family. As to quaternary structure, monomer.

The protein localises to the cytoplasm. It carries out the reaction AMP + ATP = 2 ADP. It participates in purine metabolism; AMP biosynthesis via salvage pathway; AMP from ADP: step 1/1. Functionally, catalyzes the reversible transfer of the terminal phosphate group between ATP and AMP. Plays an important role in cellular energy homeostasis and in adenine nucleotide metabolism. In Campylobacter hominis (strain ATCC BAA-381 / DSM 21671 / CCUG 45161 / LMG 19568 / NCTC 13146 / CH001A), this protein is Adenylate kinase.